The primary structure comprises 252 residues: Thiazole synthase (252 aa).

The Schiff-base intermediate with DXP role is filled by K98. 1-deoxy-D-xylulose 5-phosphate-binding positions include G159, 185–186, and 207–208; these read AG and AT.

This sequence belongs to the ThiG family. As to quaternary structure, homotetramer. Forms heterodimers with either ThiH or ThiS.

It localises to the cytoplasm. It carries out the reaction [ThiS sulfur-carrier protein]-C-terminal-Gly-aminoethanethioate + 2-iminoacetate + 1-deoxy-D-xylulose 5-phosphate = [ThiS sulfur-carrier protein]-C-terminal Gly-Gly + 2-[(2R,5Z)-2-carboxy-4-methylthiazol-5(2H)-ylidene]ethyl phosphate + 2 H2O + H(+). It participates in cofactor biosynthesis; thiamine diphosphate biosynthesis. Its function is as follows. Catalyzes the rearrangement of 1-deoxy-D-xylulose 5-phosphate (DXP) to produce the thiazole phosphate moiety of thiamine. Sulfur is provided by the thiocarboxylate moiety of the carrier protein ThiS. In vitro, sulfur can be provided by H(2)S. The chain is Thiazole synthase from Mycobacterium avium (strain 104).